Reading from the N-terminus, the 125-residue chain is Oxytocin-neurophysin 1 (125 aa).

The N-terminal stretch at 1-19 is a signal peptide; it reads MACPSLACCLLGLLALTSA. Cysteines 20 and 25 form a disulfide. Residue Gly-28 is modified to Glycine amide. 7 disulfide bridges follow: Cys-41-Cys-85, Cys-44-Cys-58, Cys-52-Cys-75, Cys-59-Cys-65, Cys-92-Cys-104, Cys-98-Cys-116, and Cys-105-Cys-110.

This sequence belongs to the vasopressin/oxytocin family. Interacts with oxytocin receptor (Ki=1.5 nM). Interacts with vasopressin V1aR/AVPR1A (Ki=37 nM), V1bR/AVPR1B (Ki=222 nM), and V2R/AVPR2 receptors (Ki=823 nM).

Functionally, neurophysin 1 specifically binds oxytocin. Oxytocin causes contraction of the smooth muscle of the uterus and of the mammary gland. Acts by binding to oxytocin receptor (OXTR). This is Oxytocin-neurophysin 1 (Oxt) from Rattus norvegicus (Rat).